A 187-amino-acid polypeptide reads, in one-letter code: Protein SCM4 (187 aa).

3 helical membrane-spanning segments follow: residues 11–31, 45–65, and 80–100; these read IAVS…VISI, VLCT…GAFG, and LLCG…VSLF. A compositionally biased stretch (basic and acidic residues) spans 114 to 134; it reads DLEKQKDEKLPQHHPEVKDGE. Residues 114-135 are disordered; it reads DLEKQKDEKLPQHHPEVKDGEA. A helical membrane pass occupies residues 162–182; the sequence is MSLHMSIVTGITIFTFGKCIL.

It belongs to the ATG33 family.

The protein localises to the membrane. This Saccharomyces cerevisiae (strain ATCC 204508 / S288c) (Baker's yeast) protein is Protein SCM4 (SCM4).